The sequence spans 181 residues: Proteinase inhibitor B (181 aa).

Residues 1 to 24 form the signal peptide; the sequence is MAASNALLLISGALLISLAVLCQG. 3 cysteine pairs are disulfide-bonded: C67-C113, C134-C143, and C136-C139.

Belongs to the protease inhibitor I3 (leguminous Kunitz-type inhibitor) family.

Its subcellular location is the secreted. In terms of biological role, possesses two reactive sites. Inhibits two molecules of trypsin simultaneously. Inhibits efficiently kallikrein, but chymotrypsin weakly. The sequence is that of Proteinase inhibitor B from Sagittaria sagittifolia (Arrowhead).